Here is a 287-residue protein sequence, read N- to C-terminus: CTD small phosphatase-like protein 3 (287 aa).

Residues 60–219 enclose the FCP1 homology domain; the sequence is RSTPEYTLVL…LKLCSFLEAI (160 aa).

This sequence belongs to the CTDSPL2 family.

Functionally, probable phosphatase. This is CTD small phosphatase-like protein 3 (scpl-3) from Caenorhabditis elegans.